Consider the following 1477-residue polypeptide: Neurexin-1 (1477 aa).

Residues 1-30 (MGTALLQRGGCFLLCLSLLLLGCWAELGSG) form the signal peptide. Residues 31–217 (LEFPGAEGQW…PPNSGGGSPC (187 aa)) enclose the Laminin G-like 1 domain. At 31–1401 (LEFPGAEGQW…EVIRESSSTT (1371 aa)) the chain is on the extracellular side. Residues N125 and N190 are each glycosylated (N-linked (GlcNAc...) asparagine). The tract at residues 198–221 (DSGEVKLDDEPPNSGGGSPCEAGE) is disordered. The EGF-like 1 domain occupies 213-256 (GGSPCEAGEEGEGGVCLNGGVCSVVDDQAVCDCSRTGFRGKDCS). Intrachain disulfides connect C228-C243 and C245-C255. Laminin G-like domains follow at residues 283 to 473 (IATF…AFKC) and 480 to 672 (DPIT…KPSC). 3 residues coordinate Ca(2+): D329, L346, and M407. 5 cysteine pairs are disulfide-bonded: C437-C473, C643-C672, C680-C691, C685-C700, and C702-C712. An EGF-like 2 domain is found at 676–713 (TAKPCLSNPCKNNGMCRDGWNRYVCDCSGTGYLGRSCE). 2 consecutive Laminin G-like domains span residues 718-891 (VLSY…IDYC) and 905-1080 (DPVT…ERGC). Ca(2+) contacts are provided by D765 and L782. N790 carries N-linked (GlcNAc...) asparagine glycosylation. R841 is a Ca(2+) binding site. Disulfide bonds link C883–C891, C1052–C1080, C1087–C1098, C1092–C1107, and C1109–C1119. The EGF-like 3 domain occupies 1083–1120 (PSTTCQEDSCSNQGVCLQQWDGFSCDCSMTSFSGPLCN). A Laminin G-like 6 domain is found at 1126-1294 (YIFSKGGGQI…DANIAIVGNV (169 aa)). Residues D1176 and V1193 each contribute to the Ca(2+) site. N-linked (GlcNAc...) asparagine glycosylation is present at N1223. Ca(2+) is bound by residues I1245 and N1247. The disordered stretch occupies residues 1325-1390 (TTTLATSTAR…AGGREPYPGS (66 aa)). An O-linked (Xyl...) (heparan sulfate) serine glycan is attached at S1355. A helical transmembrane segment spans residues 1402-1422 (GMVVGIVAAAALCILILLYAM). The Cytoplasmic portion of the chain corresponds to 1423–1477 (YKYRNRDEGSYHVDESRNYISNSAQSNGAVVKEKQPSSAKSSNKNKKNKDKEYYV). Residues 1444–1470 (NSAQSNGAVVKEKQPSSAKSSNKNKKN) form an interaction with CASK region. The segment at 1444–1477 (NSAQSNGAVVKEKQPSSAKSSNKNKKNKDKEYYV) is disordered.

Belongs to the neurexin family. In terms of assembly, interacts (via laminin G-like domain 2 and/or laminin G-like domain 6) with NLGN1 forming a heterotetramer, where one NLGN1 dimer interacts with one NRXN1 dimer. Also interacts (via laminin G-like domain 2 and/or laminin G-like domain 6) with NLGN2, NLGN3 and NLGN4L; interactions with NLGN1, NLGN2, NLGN3 and NLGN4L are calcium-dependent. Interacts (via cytoplasmic C-terminal region) with CASK (via the PDZ, SH3 and guanylate kinase-like domains). Interacts (via cytoplasmic C-terminus) with CASKIN1 and APBA1. Interacts (via laminin G-like domain 2) with NXPH1 and NXPH3. Alpha-type isoforms (neurexin-1-alpha) interact (via laminin G-like domain 2 and/or laminin G-like domain 6) with DAG1 (via alpha-dystroglycan chain). Interacts with LRRTM1, LRRTM2, LRRTM3 and LRRTM4. Interacts with SYT13 and SYTL1. Interacts with CBLN1, CBLN2 and, less avidly, with CBLN4. Interacts with CLSTN3. In terms of processing, O-glycosylated; contains heparan sulfate. Heparan sulfate attachment is required for synapse development by mediating interactions with neuroligins and LRRTM2. In terms of tissue distribution, brain.

The protein resides in the presynaptic cell membrane. Cell surface protein involved in cell-cell-interactions, exocytosis of secretory granules and regulation of signal transmission. Function is isoform-specific. Alpha-type isoforms have a long N-terminus with six laminin G-like domains and play an important role in synaptic signal transmission. Alpha-type isoforms play a role in the regulation of calcium channel activity and Ca(2+)-triggered neurotransmitter release at synapses and at neuromuscular junctions. They play an important role in Ca(2+)-triggered exocytosis of secretory granules in pituitary gland. They may affect their functions at synapses and in endocrine cells via their interactions with proteins from the exocytotic machinery. Likewise, alpha-type isoforms play a role in regulating the activity of postsynaptic NMDA receptors, a subtype of glutamate-gated ion channels. Both alpha-type and beta-type isoforms may play a role in the formation or maintenance of synaptic junctions via their interactions (via the extracellular domains) with neuroligin family members, CBLN1 or CBLN2. In vitro, triggers the de novo formation of presynaptic structures. May be involved in specification of excitatory synapses. Alpha-type isoforms were first identified as receptors for alpha-latrotoxin from spider venom. In Homo sapiens (Human), this protein is Neurexin-1 (NRXN1).